We begin with the raw amino-acid sequence, 1241 residues long: ATP-dependent helicase/nuclease subunit A (1241 aa).

A UvrD-like helicase ATP-binding domain is found at S12 to R485. A33–T40 contributes to the ATP binding site. Residues G505–G805 enclose the UvrD-like helicase C-terminal domain.

Belongs to the helicase family. AddA subfamily. Heterodimer of AddA and AddB/RexB. Mg(2+) is required as a cofactor.

It carries out the reaction Couples ATP hydrolysis with the unwinding of duplex DNA by translocating in the 3'-5' direction.. The enzyme catalyses ATP + H2O = ADP + phosphate + H(+). The heterodimer acts as both an ATP-dependent DNA helicase and an ATP-dependent, dual-direction single-stranded exonuclease. Recognizes the chi site generating a DNA molecule suitable for the initiation of homologous recombination. The AddA nuclease domain is required for chi fragment generation; this subunit has the helicase and 3' -&gt; 5' nuclease activities. In Bacillus thuringiensis subsp. konkukian (strain 97-27), this protein is ATP-dependent helicase/nuclease subunit A.